The primary structure comprises 331 residues: Tryptophan--tRNA ligase (331 aa).

Residues 10–12 (QPS) and 18–19 (GN) each bind ATP. The 'HIGH' region signature appears at 11–19 (PSGQLTLGN). Aspartate 133 contributes to the L-tryptophan binding site. Residues 145–147 (GED), valine 184, and 193–197 (KMSKS) contribute to the ATP site. A 'KMSKS' region motif is present at residues 193–197 (KMSKS).

It belongs to the class-I aminoacyl-tRNA synthetase family. As to quaternary structure, homodimer.

The protein resides in the cytoplasm. The enzyme catalyses tRNA(Trp) + L-tryptophan + ATP = L-tryptophyl-tRNA(Trp) + AMP + diphosphate + H(+). Catalyzes the attachment of tryptophan to tRNA(Trp). The polypeptide is Tryptophan--tRNA ligase (Listeria monocytogenes serotype 4b (strain F2365)).